The chain runs to 325 residues: 5-dehydro-2-deoxygluconokinase (325 aa).

It belongs to the carbohydrate kinase PfkB family.

The enzyme catalyses 5-dehydro-2-deoxy-D-gluconate + ATP = 6-phospho-5-dehydro-2-deoxy-D-gluconate + ADP + H(+). The protein operates within polyol metabolism; myo-inositol degradation into acetyl-CoA; acetyl-CoA from myo-inositol: step 5/7. In terms of biological role, catalyzes the phosphorylation of 5-dehydro-2-deoxy-D-gluconate (2-deoxy-5-keto-D-gluconate or DKG) to 6-phospho-5-dehydro-2-deoxy-D-gluconate (DKGP). In Listeria monocytogenes serotype 4a (strain HCC23), this protein is 5-dehydro-2-deoxygluconokinase.